A 353-amino-acid chain; its full sequence is Guanine nucleotide-binding protein subunit alpha (353 aa).

Positions 1–26 (MGCGMSTEEKEGKARNEEIENQLKRD) are disordered. G2 carries N-myristoyl glycine lipidation. C3 is lipidated: S-palmitoyl cysteine. Over residues 7 to 26 (TEEKEGKARNEEIENQLKRD) the composition is skewed to basic and acidic residues. The 322-residue stretch at 32-353 (NEIKMLLLGA…QENLRLCGLI (322 aa)) folds into the G-alpha domain. The G1 motif stretch occupies residues 35–48 (KMLLLGAGESGKST). E43, S44, G45, K46, S47, T48, D150, L175, T181, G203, N269, K270, D272, and A325 together coordinate GTP. S47 contributes to the Mg(2+) binding site. The interval 173–181 (DVLRSRVKT) is G2 motif. T181 serves as a coordination point for Mg(2+). A G3 motif region spans residues 196–205 (YRMFDVGGQR). The interval 265–272 (ILFLNKID) is G4 motif. A G5 motif region spans residues 323 to 328 (TCATDT).

This sequence belongs to the G-alpha family. G(q) subfamily. As to quaternary structure, g proteins are composed of 3 units; alpha, beta and gamma. The alpha chain contains the guanine nucleotide binding site. It depends on Mg(2+) as a cofactor.

In terms of biological role, guanine nucleotide-binding proteins (G proteins) are involved as modulators or transducers in various transmembrane signaling systems. In Cryphonectria parasitica (Chestnut blight fungus), this protein is Guanine nucleotide-binding protein subunit alpha.